Here is a 359-residue protein sequence, read N- to C-terminus: GTP cyclohydrolase FolE2 (359 aa).

Belongs to the GTP cyclohydrolase IV family.

It carries out the reaction GTP + H2O = 7,8-dihydroneopterin 3'-triphosphate + formate + H(+). It functions in the pathway cofactor biosynthesis; 7,8-dihydroneopterin triphosphate biosynthesis; 7,8-dihydroneopterin triphosphate from GTP: step 1/1. In terms of biological role, converts GTP to 7,8-dihydroneopterin triphosphate. This is GTP cyclohydrolase FolE2 from Cereibacter sphaeroides (strain ATCC 17029 / ATH 2.4.9) (Rhodobacter sphaeroides).